Here is a 199-residue protein sequence, read N- to C-terminus: NAD(P)H dehydrogenase (quinone) (199 aa).

The Flavodoxin-like domain maps to 4-190 (ILVLYYSMYG…AIARFQGEHV (187 aa)). FMN is bound by residues 10-15 (SMYGHI) and 79-81 (TRF). An NAD(+)-binding site is contributed by tyrosine 12. Tryptophan 99 provides a ligand contact to substrate. Residues 114 to 119 (STGTGG) and histidine 134 contribute to the FMN site.

This sequence belongs to the WrbA family. FMN is required as a cofactor.

The catalysed reaction is a quinone + NADH + H(+) = a quinol + NAD(+). It carries out the reaction a quinone + NADPH + H(+) = a quinol + NADP(+). The sequence is that of NAD(P)H dehydrogenase (quinone) from Yersinia enterocolitica serotype O:8 / biotype 1B (strain NCTC 13174 / 8081).